The sequence spans 589 residues: Aspartate--tRNA ligase (589 aa).

Glu-176 lines the L-aspartate pocket. An aspartate region spans residues 200 to 203 (QLFK). Residue Arg-222 coordinates L-aspartate. ATP is bound by residues 222-224 (RDE) and Gln-231. His-449 contacts L-aspartate. Glu-483 provides a ligand contact to ATP. Arg-490 contacts L-aspartate. 535 to 538 (GLDR) contributes to the ATP binding site.

This sequence belongs to the class-II aminoacyl-tRNA synthetase family. Type 1 subfamily. As to quaternary structure, homodimer.

It is found in the cytoplasm. The catalysed reaction is tRNA(Asp) + L-aspartate + ATP = L-aspartyl-tRNA(Asp) + AMP + diphosphate. In terms of biological role, catalyzes the attachment of L-aspartate to tRNA(Asp) in a two-step reaction: L-aspartate is first activated by ATP to form Asp-AMP and then transferred to the acceptor end of tRNA(Asp). This Enterococcus faecalis (strain ATCC 700802 / V583) protein is Aspartate--tRNA ligase.